The primary structure comprises 160 residues: Transcription elongation factor GreA (160 aa).

Residues 3–84 are a coiled coil; sequence SIVNDKILLT…SKAKIIKADL (82 aa).

Belongs to the GreA/GreB family.

Its function is as follows. Necessary for efficient RNA polymerase transcription elongation past template-encoded arresting sites. The arresting sites in DNA have the property of trapping a certain fraction of elongating RNA polymerases that pass through, resulting in locked ternary complexes. Cleavage of the nascent transcript by cleavage factors such as GreA or GreB allows the resumption of elongation from the new 3'terminus. GreA releases sequences of 2 to 3 nucleotides. The polypeptide is Transcription elongation factor GreA (Mesomycoplasma hyopneumoniae (strain 7448) (Mycoplasma hyopneumoniae)).